We begin with the raw amino-acid sequence, 306 residues long: tRNA (guanine-N(1)-)-methyltransferase (306 aa).

Residues glycine 157 and 182–187 each bind S-adenosyl-L-methionine; that span reads IGDYVL.

The protein belongs to the RNA methyltransferase TrmD family. Homodimer.

The protein localises to the cytoplasm. The enzyme catalyses guanosine(37) in tRNA + S-adenosyl-L-methionine = N(1)-methylguanosine(37) in tRNA + S-adenosyl-L-homocysteine + H(+). Functionally, specifically methylates guanosine-37 in various tRNAs. This Bifidobacterium adolescentis (strain ATCC 15703 / DSM 20083 / NCTC 11814 / E194a) protein is tRNA (guanine-N(1)-)-methyltransferase.